The sequence spans 362 residues: NAD(P)H-quinone oxidoreductase subunit 1, chloroplastic (362 aa).

8 helical membrane passes run 29–49, 103–123, 128–148, 164–184, 202–222, 247–267, 303–323, and 342–362; these read ILPI…IVWL, IAVI…HFVL, IGVF…LMAG, AAQS…ISLL, FFGW…ISSL, YSGI…LVSS, TMGI…SITI, and FLLP…LVSL.

It belongs to the complex I subunit 1 family. In terms of assembly, NDH is composed of at least 16 different subunits, 5 of which are encoded in the nucleus.

The protein resides in the plastid. The protein localises to the chloroplast thylakoid membrane. It carries out the reaction a plastoquinone + NADH + (n+1) H(+)(in) = a plastoquinol + NAD(+) + n H(+)(out). It catalyses the reaction a plastoquinone + NADPH + (n+1) H(+)(in) = a plastoquinol + NADP(+) + n H(+)(out). Its function is as follows. NDH shuttles electrons from NAD(P)H:plastoquinone, via FMN and iron-sulfur (Fe-S) centers, to quinones in the photosynthetic chain and possibly in a chloroplast respiratory chain. The immediate electron acceptor for the enzyme in this species is believed to be plastoquinone. Couples the redox reaction to proton translocation, and thus conserves the redox energy in a proton gradient. The sequence is that of NAD(P)H-quinone oxidoreductase subunit 1, chloroplastic from Hordeum vulgare (Barley).